The following is a 281-amino-acid chain: Auxin-responsive protein IAA10 (281 aa).

2 disordered regions span residues 1-115 (MRGG…VVGW) and 130-157 (AKENTSETDTKKTATNESDVQKDKEEGE). The segment covering 7 to 17 (GPTAGEPPGTE) has biased composition (low complexity). Over residues 18–35 (AEAEEVEESSAGDDEELE) the composition is skewed to acidic residues. The EAR-like (transcriptional repression) motif lies at 36 to 40 (LGLSL). 2 stretches are compositionally biased toward low complexity: residues 36 to 49 (LGLSLGSKKQQQQQ) and 63 to 84 (PAAALSPDSSVSSSSPAAAAAA). Residues 133-157 (NTSETDTKKTATNESDVQKDKEEGE) are compositionally biased toward basic and acidic residues. Residues 163–259 (AGWVKVNMDG…KRLRIMRTSD (97 aa)) form the PB1 domain.

It belongs to the Aux/IAA family. In terms of assembly, homodimers and heterodimers. As to expression, highly expressed in flowers. Expressed in shoots.

It localises to the nucleus. Functionally, aux/IAA proteins are short-lived transcriptional factors that function as repressors of early auxin response genes at low auxin concentrations. The polypeptide is Auxin-responsive protein IAA10 (IAA10) (Oryza sativa subsp. indica (Rice)).